We begin with the raw amino-acid sequence, 148 residues long: MASKLYYAVAPLVLVLLLLAPLSSARLAAAAAADDDGQWPAGGGRGRKVGGRTDVEDVEGNREVQELGLFCVVEHNRRGGSATRGRGLVFSRVVAAQTQVVSGIKYYLRIAAQEADDELVFDAVVVVKAWVPSREMVSFVPAAELPGY.

The N-terminal stretch at 1-25 (MASKLYYAVAPLVLVLLLLAPLSSA) is a signal peptide. The Secondary area of contact motif lies at 99 to 103 (QVVSG).

It belongs to the cystatin family. Phytocystatin subfamily.

Its subcellular location is the secreted. Specific inhibitor of cysteine proteinases. Probably involved in the regulation of endogenous processes and in defense against pests and pathogens. This is Cysteine proteinase inhibitor 5 from Oryza sativa subsp. japonica (Rice).